A 145-amino-acid chain; its full sequence is MAPRSLYLLAVLLFSANLFAGVGFAAAAEGPEDKGLTKGGKGKGEKGTKVGADDTNGTDPDPEPEPEPEPEPEPEPEPEPEPEPEPEPEPEPEPEPEPEPEPEPEPEPEPEPEPEPEPEPEPGAATLKSVALPFAIAAAALVAAF.

The signal sequence occupies residues 1–27; the sequence is MAPRSLYLLAVLLFSANLFAGVGFAAA. Residues 28-127 form a disordered region; it reads AEGPEDKGLT…PEPEPGAATL (100 aa). The segment covering 31–52 has biased composition (basic and acidic residues); it reads PEDKGLTKGGKGKGEKGTKVGA. A run of 32 repeats spans residues 59-60, 61-62, 63-64, 65-66, 67-68, 69-70, 71-72, 73-74, 75-76, 77-78, 79-80, 81-82, 83-84, 85-86, 87-88, 89-90, 91-92, 93-94, 95-96, 97-98, 99-100, 101-102, 103-104, 105-106, 107-108, 109-110, 111-112, 113-114, 115-116, 117-118, 119-120, and 121-122. Residues 59–122 form a 32 X 2 AA tandem repeats of [DE]-P region; that stretch reads DPDPEPEPEP…EPEPEPEPEP (64 aa). Acidic residues predominate over residues 60-120; sequence PDPEPEPEPE…EPEPEPEPEP (61 aa). The GPI-anchor amidated glycine moiety is linked to residue Gly123. Positions 124-145 are excised as a propeptide; it reads AATLKSVALPFAIAAAALVAAF.

It localises to the cell membrane. Major surface antigen of procyclic forms. The chain is Procyclic form-specific polypeptide B-alpha (PARPB) from Trypanosoma brucei brucei.